Here is a 192-residue protein sequence, read N- to C-terminus: uncharacterized protein (192 aa).

The tract at residues 168 to 192 (PLWRKSEAGSRKARTSNSGGPTKRA) is disordered. Residues 182-192 (TSNSGGPTKRA) are compositionally biased toward polar residues.

This sequence to A.xylinum IS1268 ORFA.

This is an uncharacterized protein from Sinorhizobium fredii (strain NBRC 101917 / NGR234).